We begin with the raw amino-acid sequence, 653 residues long: MIKITFPDGNFREYEAGITGWDIAGSISPRLQQDVLAAGVNGQVWDLHRPINEDAEVKLFKWDDAEGKHAFWHSSAHLMAEALEELYPGIKFGIGPAIENGFYYDVDPGEGISIKDADLPAIEKRMQDLAARKETIIRRDIAKADALRMFGDKDDQYKVELISELADGTITTYTQGGFTDLCRGPHLPNTGYIKAIKLLSVAGAYWRGDEKRKQLTRIYGISFPKKKMLDEYLELLEEAKKRDHRKIGKELELFAFSQNVGAGLPLWLPRGTQLRLRLEDFLKQIQKHFGYQQVITPHIGNKNLYITSGHYAKYGQDSFRPINTPQEGEEFMLKPMNCPHHCEIFKITPHSYRDLPIRLAEFGTVYRYEQSGELHGLTRVRGFTQDDAHLFCRPDQLKEEFCKVMDIIFIIFKALDFKNFEAQISLRDKVNREKYIGSEENWERAERAIIEACEEKGLPAVIEYGEAAFYGPKLDFMVKDALGRRWQLGTIQVDYNLPERFDLEYTGEDNKKHRPVMIHRAPFGSMERFVAVLIEHTAGKFPLWLTPDQVVVLPVSERFNEYAHRVAKELNQRDIRVQVDDRNEKVGRKIRDNELKRIPYMLIVGENESREEEVSVRKQGEGDMGIMKITTFAELIEKEVDDMISAWRKDYQN.

Positions 1 to 61 constitute a TGS domain; sequence MIKITFPDGN…NEDAEVKLFK (61 aa). A catalytic region spans residues 243 to 542; sequence DHRKIGKELE…LIEHTAGKFP (300 aa). Residues Cys-338, His-389, and His-519 each contribute to the Zn(2+) site.

It belongs to the class-II aminoacyl-tRNA synthetase family. Homodimer. The cofactor is Zn(2+).

The protein localises to the cytoplasm. The enzyme catalyses tRNA(Thr) + L-threonine + ATP = L-threonyl-tRNA(Thr) + AMP + diphosphate + H(+). In terms of biological role, catalyzes the attachment of threonine to tRNA(Thr) in a two-step reaction: L-threonine is first activated by ATP to form Thr-AMP and then transferred to the acceptor end of tRNA(Thr). Also edits incorrectly charged L-seryl-tRNA(Thr). In Porphyromonas gingivalis (strain ATCC 33277 / DSM 20709 / CIP 103683 / JCM 12257 / NCTC 11834 / 2561), this protein is Threonine--tRNA ligase.